Reading from the N-terminus, the 331-residue chain is Peroxidase 49 (331 aa).

The N-terminal stretch at 1 to 22 (MARLTSFLLLLSLICFVPLCLC) is a signal peptide. Cystine bridges form between C39–C119, C72–C77, C125–C326, and C204–C236. H70 (proton acceptor) is an active-site residue. Ca(2+)-binding residues include D71, V74, G76, D78, and S80. P167 is a binding site for substrate. A glycan (N-linked (GlcNAc...) asparagine) is linked at N170. Heme b is bound at residue H197. T198 lines the Ca(2+) pocket. N-linked (GlcNAc...) asparagine glycosylation is present at N213. Positions 249, 252, and 257 each coordinate Ca(2+).

The protein belongs to the peroxidase family. Classical plant (class III) peroxidase subfamily. Requires heme b as cofactor. It depends on Ca(2+) as a cofactor.

Its subcellular location is the secreted. It catalyses the reaction 2 a phenolic donor + H2O2 = 2 a phenolic radical donor + 2 H2O. In terms of biological role, removal of H(2)O(2), oxidation of toxic reductants, biosynthesis and degradation of lignin, suberization, auxin catabolism, response to environmental stresses such as wounding, pathogen attack and oxidative stress. These functions might be dependent on each isozyme/isoform in each plant tissue. This is Peroxidase 49 (PER49) from Arabidopsis thaliana (Mouse-ear cress).